The following is a 510-amino-acid chain: Beta-glucosidase 12 (510 aa).

The N-terminal stretch at 1–24 (MAAAGAMPGGLLLTFLLLAVVASG) is a signal peptide. Gln53 contributes to the a beta-D-glucoside binding site. N-linked (GlcNAc...) asparagine glycosylation is present at Asn122. Residues His157 and 202 to 203 (NE) contribute to the a beta-D-glucoside site. Glu203 acts as the Proton donor in catalysis. Cystine bridges form between Cys208–Cys243 and Cys222–Cys230. N-linked (GlcNAc...) asparagine glycosylation occurs at Asn229. A beta-D-glucoside is bound at residue Tyr346. N-linked (GlcNAc...) asparagine glycosylation is found at Asn361 and Asn371. Position 417 (Glu417) interacts with a beta-D-glucoside. Glu417 functions as the Nucleophile in the catalytic mechanism. N-linked (GlcNAc...) asparagine glycosylation is present at Asn425. A beta-D-glucoside contacts are provided by residues Trp466, 473–474 (EW), and Phe482.

It belongs to the glycosyl hydrolase 1 family.

The protein resides in the secreted. It catalyses the reaction Hydrolysis of terminal, non-reducing beta-D-glucosyl residues with release of beta-D-glucose.. In terms of biological role, hydrolyzes p-nitrophenyl beta-D-glucoside, p-nitrophenyl beta-D-galactoside, p-nitrophenyl beta-D-xyloside, p-nitrophenyl beta-D-fucoside, p-nitrophenyl beta-L-arabinoside, cello-oligosaccharides and laminaribiose. The polypeptide is Beta-glucosidase 12 (Oryza sativa subsp. indica (Rice)).